Consider the following 492-residue polypeptide: NAD(P)H-quinone oxidoreductase subunit 2 A, chloroplastic (492 aa).

The next 13 helical transmembrane spans lie at Leu6–Leu26, Thr39–Phe59, Val81–Ile101, Met106–Cys126, Leu131–Tyr151, Tyr165–Gly185, Pro209–Ala229, Trp277–Ile297, Met305–Asp325, Gly329–Ala349, Ala377–Phe397, Leu400–Leu420, and Met466–Ile486.

The protein belongs to the complex I subunit 2 family. In terms of assembly, NDH is composed of at least 16 different subunits, 5 of which are encoded in the nucleus.

Its subcellular location is the plastid. It is found in the chloroplast thylakoid membrane. The catalysed reaction is a plastoquinone + NADH + (n+1) H(+)(in) = a plastoquinol + NAD(+) + n H(+)(out). It carries out the reaction a plastoquinone + NADPH + (n+1) H(+)(in) = a plastoquinol + NADP(+) + n H(+)(out). Functionally, NDH shuttles electrons from NAD(P)H:plastoquinone, via FMN and iron-sulfur (Fe-S) centers, to quinones in the photosynthetic chain and possibly in a chloroplast respiratory chain. The immediate electron acceptor for the enzyme in this species is believed to be plastoquinone. Couples the redox reaction to proton translocation, and thus conserves the redox energy in a proton gradient. The chain is NAD(P)H-quinone oxidoreductase subunit 2 A, chloroplastic from Illicium oligandrum (Star anise).